The sequence spans 219 residues: 7-methyl-GTP pyrophosphatase (219 aa).

The active-site Proton acceptor is Asp89.

Belongs to the Maf family. YceF subfamily. A divalent metal cation is required as a cofactor.

Its subcellular location is the cytoplasm. It catalyses the reaction N(7)-methyl-GTP + H2O = N(7)-methyl-GMP + diphosphate + H(+). Functionally, nucleoside triphosphate pyrophosphatase that hydrolyzes 7-methyl-GTP (m(7)GTP). May have a dual role in cell division arrest and in preventing the incorporation of modified nucleotides into cellular nucleic acids. This Polaromonas sp. (strain JS666 / ATCC BAA-500) protein is 7-methyl-GTP pyrophosphatase.